The primary structure comprises 257 residues: Small ribosomal subunit protein eS1 (257 aa).

Residues glycine 237 to valine 257 are disordered. Residues aspartate 239 to aspartate 248 are compositionally biased toward basic and acidic residues.

The protein belongs to the eukaryotic ribosomal protein eS1 family. In terms of assembly, component of the small ribosomal subunit. Mature ribosomes consist of a small (40S) and a large (60S) subunit. The 40S subunit contains about 33 different proteins and 1 molecule of RNA (18S). The 60S subunit contains about 49 different proteins and 3 molecules of RNA (28S, 5.8S and 5S).

Its subcellular location is the cytoplasm. This Caenorhabditis elegans protein is Small ribosomal subunit protein eS1.